Here is a 96-residue protein sequence, read N- to C-terminus: DNA-directed RNA polymerase subunit Rpo11 (96 aa).

The protein belongs to the archaeal Rpo11/eukaryotic RPB11/RPC19 RNA polymerase subunit family. Part of the RNA polymerase complex.

The protein resides in the cytoplasm. The enzyme catalyses RNA(n) + a ribonucleoside 5'-triphosphate = RNA(n+1) + diphosphate. Its function is as follows. DNA-dependent RNA polymerase (RNAP) catalyzes the transcription of DNA into RNA using the four ribonucleoside triphosphates as substrates. This is DNA-directed RNA polymerase subunit Rpo11 from Methanococcus maripaludis (strain C6 / ATCC BAA-1332).